We begin with the raw amino-acid sequence, 417 residues long: Gamma-glutamyl phosphate reductase (417 aa).

The protein belongs to the gamma-glutamyl phosphate reductase family.

It localises to the cytoplasm. It carries out the reaction L-glutamate 5-semialdehyde + phosphate + NADP(+) = L-glutamyl 5-phosphate + NADPH + H(+). Its pathway is amino-acid biosynthesis; L-proline biosynthesis; L-glutamate 5-semialdehyde from L-glutamate: step 2/2. In terms of biological role, catalyzes the NADPH-dependent reduction of L-glutamate 5-phosphate into L-glutamate 5-semialdehyde and phosphate. The product spontaneously undergoes cyclization to form 1-pyrroline-5-carboxylate. This is Gamma-glutamyl phosphate reductase from Escherichia coli (strain SMS-3-5 / SECEC).